Reading from the N-terminus, the 247-residue chain is Probable proteasome subunit alpha type-5 (247 aa).

Phosphothreonine is present on Thr-55.

This sequence belongs to the peptidase T1A family. In terms of assembly, the 26S proteasome consists of a 20S proteasome core and two 19S regulatory subunits. The 20S proteasome core is composed of 28 subunits that are arranged in four stacked rings, resulting in a barrel-shaped structure. The two end rings are each formed by seven alpha subunits, and the two central rings are each formed by seven beta subunits. The catalytic chamber with the active sites is on the inside of the barrel.

The protein resides in the cytoplasm. The protein localises to the nucleus. The proteasome is a multicatalytic proteinase complex which is characterized by its ability to cleave peptides with Arg, Phe, Tyr, Leu, and Glu adjacent to the leaving group at neutral or slightly basic pH. The proteasome has an ATP-dependent proteolytic activity. The chain is Probable proteasome subunit alpha type-5 (pup2) from Schizosaccharomyces pombe (strain 972 / ATCC 24843) (Fission yeast).